Here is a 319-residue protein sequence, read N- to C-terminus: Type II secretion system protein C 2 (319 aa).

Residues 1-42 (MARVVFRDARIYLIQWLTKIRHTLNQRQSLNTDKEHLRKIVR) are Cytoplasmic-facing. A helical membrane pass occupies residues 43–65 (GMFWLMLLIISAKVAHSLWRYFS). Residues 66–319 (FSAEYTAVSP…ARHDISIALR (254 aa)) lie on the Periplasmic side of the membrane.

Belongs to the GSP C family. As to quaternary structure, interacts with outer cell membrane protein GspD2 in the periplasm.

The protein resides in the cell inner membrane. Involved in a type II secretion system (T2SS, formerly general secretion pathway, GSP) for the export of folded proteins across the outer membrane. The chain is Type II secretion system protein C 2 (gspC2) from Escherichia coli O78:H11 (strain H10407 / ETEC).